The sequence spans 290 residues: 4-diphosphocytidyl-2-C-methyl-D-erythritol kinase (290 aa).

Residue K13 is part of the active site. 96 to 106 (PMGGGIGGGSS) serves as a coordination point for ATP. D138 is a catalytic residue.

It belongs to the GHMP kinase family. IspE subfamily.

The enzyme catalyses 4-CDP-2-C-methyl-D-erythritol + ATP = 4-CDP-2-C-methyl-D-erythritol 2-phosphate + ADP + H(+). The protein operates within isoprenoid biosynthesis; isopentenyl diphosphate biosynthesis via DXP pathway; isopentenyl diphosphate from 1-deoxy-D-xylulose 5-phosphate: step 3/6. Its function is as follows. Catalyzes the phosphorylation of the position 2 hydroxy group of 4-diphosphocytidyl-2C-methyl-D-erythritol. The protein is 4-diphosphocytidyl-2-C-methyl-D-erythritol kinase of Vibrio campbellii (strain ATCC BAA-1116).